A 300-amino-acid polypeptide reads, in one-letter code: uncharacterized protein (300 aa).

Solcar repeat units lie at residues Glu-10–Phe-101, Gly-119–Tyr-199, and Phe-212–Phe-294. The next 6 membrane-spanning stretches (helical) occupy residues Ile-16–Ile-36, Ala-70–Val-86, Ala-121–Leu-141, Thr-178–Glu-198, Phe-215–Ile-235, and Leu-275–Phe-295.

It belongs to the mitochondrial carrier (TC 2.A.29) family.

Its subcellular location is the mitochondrion inner membrane. This is an uncharacterized protein from Schizosaccharomyces pombe (strain 972 / ATCC 24843) (Fission yeast).